Reading from the N-terminus, the 468-residue chain is Putative ankyrin repeat protein R580 (468 aa).

ANK repeat units follow at residues 12–41, 189–218, 249–278, 336–365, 367–393, and 394–423; these read DYFD…TLID, VINK…EINC, CHFD…KINS, SFDN…NINF, NMPT…DLEI, and HGTL…KFSL.

In Acanthamoeba polyphaga (Amoeba), this protein is Putative ankyrin repeat protein R580.